The chain runs to 543 residues: Ipecoside beta-D-glucosidase IpeGLU1 (543 aa).

A beta-D-glucoside contacts are provided by residues glutamine 36, histidine 140, asparagine 185 to glutamate 186, tyrosine 350, glutamate 422, tryptophan 471, and phenylalanine 487. Glutamate 186 (proton donor) is an active-site residue. The active-site Nucleophile is glutamate 422.

Belongs to the glycosyl hydrolase 1 family. In terms of tissue distribution, expressed in roots.

Its subcellular location is the cytoplasm. The protein localises to the cytosol. It carries out the reaction deacetylipecoside + H2O = deacetylipecoside aglycone + D-glucose. The catalysed reaction is deacetylisoipecoside + H2O = deacetylisoipecoside aglycone + D-glucose. The enzyme catalyses 6-O-methyldeacetylipecoside + H2O = 6-O-methyldeacetylipecoside aglycone + D-glucose. It catalyses the reaction 6-O-methyldeacetylisoipecoside + H2O = 6-O-methyldeacetylisoipecoside aglycone + D-glucose. It carries out the reaction ipecoside + H2O = ipecoside aglycone + D-glucose. The catalysed reaction is 3alpha(S)-strictosidine + H2O = strictosidine aglycone + D-glucose. It participates in alkaloid biosynthesis. With respect to regulation, inhibited by Cu(2+), Fe(2+) and Zn(2+). Functionally, beta-glucosidase involved in the biosynthesis of ipecac and benzylisoquinoline monoterpenoid-isoquinoline alkaloids natural products, starting by the condensation of dopamine and secologanin, and including emetine and cephaeline, drugs used both as anti-protozoal (e.g. treatment of ameobiasis) and as emetic agents. In response to pathogen and herbivore attack, triggers the release of toxic ipecoside aglycon to trigger defense responses. Catalyzes deglucosylation both on (1S)-diastereomer and (1R)-diastereomer substrates, including ipecoside, the main alkaloidal glucoside. Also active on N-deacetylisoipecoside, 6-O-methyl-N-deacetylisoipecoside, 6-O-methyl-N-deacetylipecoside and N-deacetylipecoside. The polypeptide is Ipecoside beta-D-glucosidase IpeGLU1 (Carapichea ipecacuanha (Ipecac)).